The sequence spans 591 residues: UvrABC system protein C (591 aa).

The 78-residue stretch at 14 to 91 folds into the GIY-YIG domain; it reads DQPGCYLMKD…IKKHDPKYNV (78 aa). The UVR domain maps to 196–231; it reads KEVKVELEKKMHKAAEELNFERAKELRDTLGYMEAV.

Belongs to the UvrC family. In terms of assembly, interacts with UvrB in an incision complex.

Its subcellular location is the cytoplasm. Functionally, the UvrABC repair system catalyzes the recognition and processing of DNA lesions. UvrC both incises the 5' and 3' sides of the lesion. The N-terminal half is responsible for the 3' incision and the C-terminal half is responsible for the 5' incision. The polypeptide is UvrABC system protein C (Halalkalibacterium halodurans (strain ATCC BAA-125 / DSM 18197 / FERM 7344 / JCM 9153 / C-125) (Bacillus halodurans)).